We begin with the raw amino-acid sequence, 446 residues long: Adenylosuccinate synthetase (446 aa).

Residues 21 to 27 (GDEGKGK) and 49 to 51 (GHT) contribute to the GTP site. D22 acts as the Proton acceptor in catalysis. Mg(2+) is bound by residues D22 and G49. IMP contacts are provided by residues 22-25 (DEGK), 47-50 (NAGH), T141, R155, Q236, T251, and R319. H50 serves as the catalytic Proton donor. 315–321 (VTTGRSR) provides a ligand contact to substrate. GTP is bound by residues R321, 347–349 (KLD), and 429–431 (STS).

This sequence belongs to the adenylosuccinate synthetase family. As to quaternary structure, homodimer. Mg(2+) serves as cofactor.

The protein localises to the cytoplasm. It catalyses the reaction IMP + L-aspartate + GTP = N(6)-(1,2-dicarboxyethyl)-AMP + GDP + phosphate + 2 H(+). The protein operates within purine metabolism; AMP biosynthesis via de novo pathway; AMP from IMP: step 1/2. Functionally, plays an important role in the de novo pathway of purine nucleotide biosynthesis. Catalyzes the first committed step in the biosynthesis of AMP from IMP. The chain is Adenylosuccinate synthetase from Polaromonas sp. (strain JS666 / ATCC BAA-500).